The sequence spans 275 residues: Exosome complex component Rrp42 (275 aa).

The protein belongs to the RNase PH family. Rrp42 subfamily. Component of the archaeal exosome complex. Forms a hexameric ring-like arrangement composed of 3 Rrp41-Rrp42 heterodimers. The hexameric ring associates with a trimer of Rrp4 and/or Csl4 subunits.

It is found in the cytoplasm. Non-catalytic component of the exosome, which is a complex involved in RNA degradation. Contributes to the structuring of the Rrp41 active site. The chain is Exosome complex component Rrp42 from Saccharolobus solfataricus (strain ATCC 35092 / DSM 1617 / JCM 11322 / P2) (Sulfolobus solfataricus).